The chain runs to 297 residues: Probable endonuclease 4 (297 aa).

H69, H110, E145, D179, H182, H214, D227, H229, and E259 together coordinate Zn(2+).

The protein belongs to the AP endonuclease 2 family. Zn(2+) serves as cofactor.

The enzyme catalyses Endonucleolytic cleavage to 5'-phosphooligonucleotide end-products.. In terms of biological role, endonuclease IV plays a role in DNA repair. It cleaves phosphodiester bonds at apurinic or apyrimidinic (AP) sites, generating a 3'-hydroxyl group and a 5'-terminal sugar phosphate. In Bacillus subtilis (strain 168), this protein is Probable endonuclease 4.